Here is a 436-residue protein sequence, read N- to C-terminus: Bystin (436 aa).

Positions 1–105 (MPKLKVTRGA…GSDEEDEEWP (105 aa)) are disordered. The residue at position 54 (Ser54) is a Phosphoserine. Positions 70–86 (TEHATGDRPAKPRERAT) are enriched in basic and acidic residues. Over residues 96–105 (GSDEEDEEWP) the composition is skewed to acidic residues. Ser97 is modified (phosphoserine). Thr155 carries the phosphothreonine modification. Phosphoserine occurs at positions 166 and 413.

It belongs to the bystin family. Binds trophinin, tastin and cytokeratins.

The protein localises to the cytoplasm. The protein resides in the nucleus. Its subcellular location is the nucleolus. Required for processing of 20S pre-rRNA precursor and biogenesis of 40S ribosomal subunits. In Rattus norvegicus (Rat), this protein is Bystin.